The primary structure comprises 143 residues: Periplasmic nitrate reductase, electron transfer subunit (143 aa).

The first 22 residues, 1–22, serve as a signal peptide directing secretion; it reads MKKILTLAAIVLAIGGCSGQQA. Positions 72, 85, 88, 89, 106, 121, 124, and 125 each coordinate heme c.

The protein belongs to the NapB family. In terms of assembly, component of the periplasmic nitrate reductase NapAB complex composed of NapA and NapB. Binds 2 heme C groups per subunit.

The protein resides in the periplasm. In terms of biological role, electron transfer subunit of the periplasmic nitrate reductase complex NapAB. Receives electrons from the membrane-anchored tetraheme c-type CymA protein and transfers these to NapA subunit, thus allowing electron flow between membrane and periplasm. Not essential for nitrate reduction but confers advantage to the organism when grown on nitrate and thereby a fitness gain in utilizing nitrate. The chain is Periplasmic nitrate reductase, electron transfer subunit from Shewanella oneidensis (strain ATCC 700550 / JCM 31522 / CIP 106686 / LMG 19005 / NCIMB 14063 / MR-1).